Here is a 211-residue protein sequence, read N- to C-terminus: N-(5'-phosphoribosyl)anthranilate isomerase (211 aa).

The protein belongs to the TrpF family.

The catalysed reaction is N-(5-phospho-beta-D-ribosyl)anthranilate = 1-(2-carboxyphenylamino)-1-deoxy-D-ribulose 5-phosphate. The protein operates within amino-acid biosynthesis; L-tryptophan biosynthesis; L-tryptophan from chorismate: step 3/5. The protein is N-(5'-phosphoribosyl)anthranilate isomerase of Nitrosomonas europaea (strain ATCC 19718 / CIP 103999 / KCTC 2705 / NBRC 14298).